The sequence spans 698 residues: Macrophomene synthase (698 aa).

The interval 21 to 340 is terpene cyclase; the sequence is MEYMYSVPLD…SCDRYSSYRR (320 aa). Aspartate 113 contributes to the Mg(2+) binding site. Positions 113–117 match the DDXXD 1 motif; sequence DNIAE. The NSE/DTE signature appears at 242-250; the sequence is NDFFSFNYE. The prenyltransferase stretch occupies residues 341–696; the sequence is EKHQMELPIR…IQLALERLRI (356 aa). Residues 368 to 387 form a disordered region; that stretch reads LPNGKQLDAPTESSGKDLSD. Positions 417, 420, and 449 each coordinate isopentenyl diphosphate. Residues aspartate 456 and aspartate 460 each coordinate Mg(2+). Positions 456 to 460 match the DDXXD 2 motif; the sequence is DDIED. Arginine 465 provides a ligand contact to dimethylallyl diphosphate. Arginine 466 contributes to the isopentenyl diphosphate binding site. Residues lysine 543, threonine 544, glutamine 579, asparagine 586, lysine 596, and lysine 606 each coordinate dimethylallyl diphosphate.

This sequence in the N-terminal section; belongs to the terpene synthase family. It in the C-terminal section; belongs to the FPP/GGPP synthase family. Hexamer. Mg(2+) is required as a cofactor.

It catalyses the reaction 5 isopentenyl diphosphate + dimethylallyl diphosphate = all-trans-hexaprenyl diphosphate + 5 diphosphate. It carries out the reaction all-trans-hexaprenyl diphosphate = macrophomene + diphosphate. In terms of biological role, bifunctional terpene synthase that converts dimethylallyl diphosphate (DMAPP) and isopentenyl diphosphate (IPP) into macrophomene as a single product. The C-terminal prenyltransferase (PT) domain of MpMS catalyzes formation of hexaprenyl diphosphate (HexPP), whereas the N-terminal terpene cyclase (TC) domain catalyzes the cyclization of HexPP to macrophomene. This is Macrophomene synthase from Macrophomina phaseolina (strain MS6) (Charcoal rot fungus).